Reading from the N-terminus, the 181-residue chain is Large ribosomal subunit protein uL6 (181 aa).

The protein belongs to the universal ribosomal protein uL6 family. Part of the 50S ribosomal subunit.

Its function is as follows. This protein binds to the 23S rRNA, and is important in its secondary structure. It is located near the subunit interface in the base of the L7/L12 stalk, and near the tRNA binding site of the peptidyltransferase center. This is Large ribosomal subunit protein uL6 from Saccharolobus solfataricus (strain ATCC 35092 / DSM 1617 / JCM 11322 / P2) (Sulfolobus solfataricus).